Reading from the N-terminus, the 156-residue chain is Protein-export protein SecB (156 aa).

The protein belongs to the SecB family. As to quaternary structure, homotetramer, a dimer of dimers. One homotetramer interacts with 1 SecA dimer.

The protein localises to the cytoplasm. Functionally, one of the proteins required for the normal export of preproteins out of the cell cytoplasm. It is a molecular chaperone that binds to a subset of precursor proteins, maintaining them in a translocation-competent state. It also specifically binds to its receptor SecA. The protein is Protein-export protein SecB of Yersinia enterocolitica serotype O:8 / biotype 1B (strain NCTC 13174 / 8081).